A 167-amino-acid polypeptide reads, in one-letter code: uncharacterized protein (167 aa).

A run of 2 helical transmembrane segments spans residues 21–41 (KIGL…IYKP) and 87–107 (MIIT…YVFG). Residues 136–159 (RKQRLKEQREKKEQKKEQKKEKKT) are compositionally biased toward basic and acidic residues. Positions 136–167 (RKQRLKEQREKKEQKKEQKKEKKTERRKKKKL) are disordered.

It is found in the membrane. This is an uncharacterized protein from Schizosaccharomyces pombe (strain 972 / ATCC 24843) (Fission yeast).